A 1083-amino-acid polypeptide reads, in one-letter code: MDKSSKPTIRLLFATKGCAISHSLLLLTGQISTEPLYVVSYTWTPDLDDVFVKNGREEITQVIPTKRPREVTENDEENQIMHLFCSRDVNVIFYLIGGFSTGDVRSRVWPIFFCCFKTQTDFKALYKALWYGAPLNPHIISDTLCISETFDIHSEVIQTLMVTTHHLNRKGLSDNGLCITEATLCKLVKKSVGRQELTSLYAHYERQVLAAYRRLYWGYGCSPFWYIVRFGPSEKTLVLATRYYLLQTDTSYNTLETPLYDLQAIKDLFLTYQVPALPNCSGYNISDLLSFDKLSMFCCSSTYTRGLTAKNALSYILQRIHTDTTEIHAVSEYITNDRKGLKVPDREFVDYIYLAHFECFNRKQIADHLQAVTYSDFVNKPVLLKSSNLGKRATANFFNHVRSRLNMRDYIKKNVICDVTELGPEIGHKYTITKTYTLSLTYAAKPSKFIGVCDLATTLTRRVENIEKQFSPYGWSSTIPSNPPGFDELSNFEDSVVSAEALRAANFANDTPNQSGRTGFDTSPGITKLLLFFSAATGIATHDVSILSYKTPLEALIGHSEVTGPMPVYRVALPQGAQAFAVIANDTWSSITNRYTLPHEARLIAEDLKQINPCNFVAASLRDMQLTLLLSTSVKNVSKISSNIPKDQLYINRNELFNTNLIITNLILDVDFHIRKPIPLGILHAGMRAFRHGILTAMQLLFPKAVVNPNKDPCYFYKTACPEPTVEVLDDDNLLDITSHSDIDFYIENGELYTCVEENYTEDVWFFDTQTTSEVHTHADVSNNENLHETLPCNCKEKIGFRVCVPIPNPYALVGSSTLKGFAQILQQAVLLEREFVEYIGPYLRDFSFIDTGVYSHGHSLRLPFFSKVTTTGTAVGQLLPFYVVPEQCIDILAFVTSHRNPANFHFHSRPQSNVPVQFILHNLGGEYAEFFERKVARNKQIFSPPQISLTKALKERGVTCLDAFTLEAFVDSTILESIVEHIAVHFPGRDREYTLTSSKCIAIKRDWVLFQLICGTKGFTCLRYPHRGGRTAPRTFVSLRVDHHNRLCISLAQQCFATKCDSNRMHTIFTLEVPNYPNLTSS.

Residues cysteine 1022 to cysteine 1061 form a CHC2-type zinc finger.

The protein belongs to the herpesviridae DNA primase family. In terms of assembly, associates with the helicase and the primase-associated factor to form the helicase-primase factor.

The protein resides in the host nucleus. Essential component of the helicase/primase complex. Unwinds the DNA at the replication forks and generates single-stranded DNA for both leading and lagging strand synthesis. The primase initiates primer synthesis and thereby produces large amount of short RNA primers on the lagging strand that the polymerase elongates using dNTPs. The sequence is that of DNA primase from Varicella-zoster virus (strain Oka vaccine) (HHV-3).